The following is a 378-amino-acid chain: Cytochrome P450 2C15 (378 aa).

Heme is bound at residue Cys-323.

This sequence belongs to the cytochrome P450 family. Heme serves as cofactor.

It is found in the endoplasmic reticulum membrane. The protein localises to the microsome membrane. It carries out the reaction an organic molecule + reduced [NADPH--hemoprotein reductase] + O2 = an alcohol + oxidized [NADPH--hemoprotein reductase] + H2O + H(+). Functionally, cytochromes P450 are a group of heme-thiolate monooxygenases. In liver microsomes, this enzyme is involved in an NADPH-dependent electron transport pathway. It oxidizes a variety of structurally unrelated compounds, including steroids, fatty acids, and xenobiotics. This Oryctolagus cuniculus (Rabbit) protein is Cytochrome P450 2C15 (CYP2C15).